The primary structure comprises 168 residues: NADH dehydrogenase [ubiquinone] 1 alpha subcomplex assembly factor 2 (168 aa).

Residues glycine 112–glutamine 168 form a disordered region. Residue serine 133 is modified to Phosphoserine. The segment covering alanine 145 to serine 157 has biased composition (polar residues).

This sequence belongs to the complex I NDUFA12 subunit family. Interacts with ARMC9.

The protein localises to the mitochondrion. Functionally, acts as a molecular chaperone for mitochondrial complex I assembly. Complex I functions in the transfer of electrons from NADH to the respiratory chain. The immediate electron acceptor for the enzyme is believed to be ubiquinone. Is involved in the initial steps of cilia formation, including removal of CP110 from the mother centrioles, docking of membrane vesicles to the mother centrioles, and establishment of the transition zone. This Mus musculus (Mouse) protein is NADH dehydrogenase [ubiquinone] 1 alpha subcomplex assembly factor 2 (Ndufaf2).